We begin with the raw amino-acid sequence, 332 residues long: Glucokinase (332 aa).

15-20 serves as a coordination point for ATP; sequence ADIGGT.

The protein belongs to the bacterial glucokinase family.

The protein resides in the cytoplasm. It carries out the reaction D-glucose + ATP = D-glucose 6-phosphate + ADP + H(+). The polypeptide is Glucokinase (Campylobacter jejuni subsp. doylei (strain ATCC BAA-1458 / RM4099 / 269.97)).